The chain runs to 451 residues: Kynureninase (451 aa).

Pyridoxal 5'-phosphate-binding positions include Leu131, Ser132, 159–162 (FPSD), Ser215, Asp244, His247, and Tyr269. At Lys270 the chain carries N6-(pyridoxal phosphate)lysine. Trp303 and Asn331 together coordinate pyridoxal 5'-phosphate.

It belongs to the kynureninase family. Homodimer. Pyridoxal 5'-phosphate is required as a cofactor.

It is found in the cytoplasm. The enzyme catalyses L-kynurenine + H2O = anthranilate + L-alanine + H(+). It catalyses the reaction 3-hydroxy-L-kynurenine + H2O = 3-hydroxyanthranilate + L-alanine + H(+). It functions in the pathway amino-acid degradation; L-kynurenine degradation; L-alanine and anthranilate from L-kynurenine: step 1/1. It participates in cofactor biosynthesis; NAD(+) biosynthesis; quinolinate from L-kynurenine: step 2/3. Functionally, catalyzes the cleavage of L-kynurenine (L-Kyn) and L-3-hydroxykynurenine (L-3OHKyn) into anthranilic acid (AA) and 3-hydroxyanthranilic acid (3-OHAA), respectively. The sequence is that of Kynureninase from Dictyostelium discoideum (Social amoeba).